The chain runs to 414 residues: Tryptophan synthase beta chain (414 aa).

Basic and acidic residues predominate over residues 1-26 (MVSTFSRKDQNYKNDDLNQPSKEGRF). Residues 1-27 (MVSTFSRKDQNYKNDDLNQPSKEGRFG) form a disordered region. Position 109 is an N6-(pyridoxal phosphate)lysine (Lys109).

Belongs to the TrpB family. Tetramer of two alpha and two beta chains. Pyridoxal 5'-phosphate serves as cofactor.

The catalysed reaction is (1S,2R)-1-C-(indol-3-yl)glycerol 3-phosphate + L-serine = D-glyceraldehyde 3-phosphate + L-tryptophan + H2O. Its pathway is amino-acid biosynthesis; L-tryptophan biosynthesis; L-tryptophan from chorismate: step 5/5. Its function is as follows. The beta subunit is responsible for the synthesis of L-tryptophan from indole and L-serine. This chain is Tryptophan synthase beta chain, found in Prochlorococcus marinus (strain MIT 9301).